A 350-amino-acid polypeptide reads, in one-letter code: Phosphotriesterase-related protein (350 aa).

6 residues coordinate a divalent metal cation: histidine 22, histidine 24, glutamate 169, histidine 201, histidine 230, and aspartate 298.

It belongs to the metallo-dependent hydrolases superfamily. Phosphotriesterase family. Requires a divalent metal cation as cofactor.

The polypeptide is Phosphotriesterase-related protein (Drosophila grimshawi (Hawaiian fruit fly)).